The primary structure comprises 1173 residues: Eukaryotic translation initiation factor 3 subunit A (1173 aa).

The PCI domain occupies 319–502 (LQRMAAHVLL…NSIYFGTDLT (184 aa)). Disordered stretches follow at residues 589-613 (QNNA…LAEQ) and 836-1173 (AAEA…PVQL). Basic and acidic residues-rich tracts occupy residues 836–900 (AAEA…RGGD), 925–1011 (DRNE…EPDS), 1028–1081 (SRDD…DAAP), and 1090–1125 (DAPR…RAPK). Positions 1128–1142 (GPSGGTGTAAGGGGN) are enriched in gly residues. A compositionally biased stretch (basic and acidic residues) spans 1149-1165 (PRDEPAPKRDQPQDKGK).

Belongs to the eIF-3 subunit A family. In terms of assembly, component of the eukaryotic translation initiation factor 3 (eIF-3) complex. The eIF-3 complex interacts with pix.

The protein resides in the cytoplasm. Functionally, RNA-binding component of the eukaryotic translation initiation factor 3 (eIF-3) complex, which is involved in protein synthesis of a specialized repertoire of mRNAs and, together with other initiation factors, stimulates binding of mRNA and methionyl-tRNAi to the 40S ribosome. The eIF-3 complex specifically targets and initiates translation of a subset of mRNAs involved in cell proliferation. The sequence is that of Eukaryotic translation initiation factor 3 subunit A from Drosophila persimilis (Fruit fly).